Here is a 243-residue protein sequence, read N- to C-terminus: Putative outer membrane protein RP075 (243 aa).

Positions 1 to 23 are cleaved as a signal peptide; sequence MLRIVKKLWVILFISNISINSFA.

It belongs to the OmpW/AlkL family.

The protein resides in the cell outer membrane. In Rickettsia prowazekii (strain Madrid E), this protein is Putative outer membrane protein RP075.